We begin with the raw amino-acid sequence, 103 residues long: Co-chaperonin GroES (103 aa).

The protein belongs to the GroES chaperonin family. As to quaternary structure, heptamer of 7 subunits arranged in a ring. Interacts with the chaperonin GroEL.

Its subcellular location is the cytoplasm. Together with the chaperonin GroEL, plays an essential role in assisting protein folding. The GroEL-GroES system forms a nano-cage that allows encapsulation of the non-native substrate proteins and provides a physical environment optimized to promote and accelerate protein folding. GroES binds to the apical surface of the GroEL ring, thereby capping the opening of the GroEL channel. This is Co-chaperonin GroES from Synechococcus sp. (strain JA-3-3Ab) (Cyanobacteria bacterium Yellowstone A-Prime).